A 2910-amino-acid polypeptide reads, in one-letter code: MAEDMPINEPLAIVGSACRFAGGVSSPSKLWDLLSNPRDVRSEILKSRFNAENYYHPDSAYHGHSNIQHSYLLEEDVAAFDSQFFGIKPVEAKAIDPQQRLLMETVYEGLESAGLTIDSLRDSDTAVYVGLMCGDYEASLLRDLSTAPVYAATGIGRSILSNRVSYFFNWHGPSMTIDTACSSSLVAVHLAAQALRSGESRVALACGSNLLLGPENYIMESKLKMLSPDGRSKMWDKDANGYARGDGVAACVLKTLSAAIEDGDDIECIIRETGVNQDGATTGITMPSATAQQALIRSTYKKAGLDLSKVNDRPQFFEAHGTGTPAGDPIEAEAISKAFFDEQYGTMVAAEPLYVGSIKTILGHTEGTAGLAALLKASLALQHSVVPPNMLLNNLSDKVAPFTKNLEILKAPKAWPSVEAGQPRRASVNSFGFGGTNAHAILESYEPRRHLQNGVTNSEAIVQFTPFVFSALSHQSLRATLSAYADHIQSNPAVNLRDMAYTLQERRSAFPYRVSFAALSADELATKIRAEVEGTKAEELGVRVSAPQTDGKRRKVLGVFTGQGAQYARMGAELLETSATARKIIQELQTCLEQLPEDLRPDFSLEEELRAAADSSRVLTGAFSFLSTVVQLLLVDLLKLAGVQFDAIVAHSSGEMAAAYAAGRLSARDAMCVAYFRGRFASKMESPNGADKKGAMLAAGMSEEDAATLCADEIFAGRVCVAAVNSSSSVTISGDEDAIDEFKLILDDENKFNRKLRVDRAYHSNHVSRRLADYVTLIQSAGVQALEPGKDAPLWISSVYGREVTTDMNLDDEYWGASVARSVQFYQALKLVLEADDYQVALEVGPHPALKGPASQTIQELGKSIPYYGVLSRGTDATVSLASSLGSLWCHLGGEQLDLTGFEKEVNDNKSSLRVVKGLPRYQWNHEASYWHESRASKKHKAQTQPFNQLLGTMMPDSAAHHLSWGHLLRASEIEWASGHQVQSQTVFPAAGYICTAFEGARVLAANRDVRLFELKDFVIHQALTFSHDDAGIEVQASIADIQRPSNDRIKAKFTYSASLGGEDLDLVAEAELHIVFGPSSERTLPHRAARPPHMISVDNERFYTFLATLGYGFEGPFKSLHTLRRKLGSSVCAVNSVPRENTFGRPLLVHPAELDGGIQSLILAYSYPDDDQLLNMHLPTSMSSIRVNPALCQSMTDISVDSRLGRNKSAGFSGDVSLYTSNSECAAIQMQGVELKPLGALTAKDDRKVFSKYQWVKNRLDGDLAACDTTVTKHHQDVLEGLERISTYYLNKLDAEVPVDSPLRKEGPHSNYLNYAHHIVELIQKGEHKVAKKEWLSDSPEDLHQATAHLSDLIDYRMMHLVGQQMPRVLRGETNMLEEMRVSNILDDYYKGAFGSREAGLWIGKIISQLAERYPHLNILEVGAGTGGATTRVLQGLSNKFLSYTFTDVSSGFFEGAAEMFSEHKDRMVFKTFDCGQDPVTQGYAEGTCDVVVAFLVIHATPDLELTMRNIRKLLKPGGLLVVGEGTNNGQPYGSAGFIFGSLPGWWLGADTGRPLSPFVSYSEWERLLKASAFSGIDSTAPQAFQDILGMTVFAAQAVDDRVNFLREPLNPDVLSQSSAAIEYPIKNLVVVGGSTERTRPLVASVTDTLKNHSAQVHTFETLSAVDFSLVDEDATVVSLSELDKPVFQDLTPDEWMAFKTLFSCPTRLFWVTSGRLSEEPFSNMTVGFARTAVFETPALRFQNVDISNLETLTPQDLAEKVLRFHASTSPVPADLKQFAWPLEPEIVIDAQGEELVPRLRHIAERNDRYNSARRPITNETDITKTPATLHNDREGWKLKELPGCASPAEHPGDRLSLEVTHSVLSALRTPYGHQFLVFGIERQSQTRFMALVPTLISVVDVSKGSAIPLPTSTLADSELLTSLAATLVSMAVVDPLMEGDTLVVQNATELFASTIATLATSKKIRIVFVADFARPNVPESWVKLEPYVTQSEIAEILPANTACFVDLSIEASENASVIPSSLPLHHRKENVSTLYSPLGWESGSSSAGTALGQLLHRAWFYAQQEAFAHRQNNATSQVVGITDLLEGLNPGNPATVIDWTLSKTHPVHVSRLDSVVFFKGDKTYWLCGLSGALGVSLVDWMIERGAKYLVLTSRNPNISPDWIAGHKRNGVTVTIVPCDVTNEPAIRAAHQFICETLPPIVGVLNGAMVLRDVSIRNMSYELMSDVFRPKVHGSIHLDRIFRDEPLDFFILFSSINCVIGNLGQANYAAANTFMCSLAAQRRKRGLAATALNVGAIIGAGYMERESSKALDLTVSKMALMHLSEQDYHQLFAEGIDSGRPGSGDEAELTTGLLDIPAATDTENTPKWHSNPAFLDFIVHQVEKNGADSGNEVVASVQDQLAACQSRSEVLAVVKGRFAMQLRNVLQMTTADEDLMALRSRDIGLDSLISVDIRSWFLKNFEVSVPVLKIMGNDTMAELAELAAEQAPASLLPGLGGEAPAPTEEAQANNAASQPVPLTVVPQSDETGSSSADSNHDGSPGESRGGSTGYTTPTTPDPHSTKGPIRIDWDAEIALPNAANIAIEIVPVARPQKIVLTGVSGLLGRSLLLRLLEDASVKKIFCIAVRRLEERLQSEELLLDDRVQYFSGNLEQPRLGLSEEDAIAIFSQADAVIHNGADTSHLKFYPEIKAANAGSTKELISLCMARKVPIHYISTVGVALFGNYESFPQVSIAAHHPPIDGSHGYVAAKWVSERLLEELQRQHGVNVWIHRPSTIVREGADNENAAAQTDWMNALMAYMRKMQAVPVMKNLRGALDFVYVKNAADSILTAVLENKPVGASYTHQVGDIVIPLDNLKEFIEDTGALNVEELPIEKWSARAVTVGLNRGVAALIDSMDDPGQPHYPRLLRQ.

The 437-residue stretch at 8 to 444 (NEPLAIVGSA…GTNAHAILES (437 aa)) folds into the Ketosynthase family 3 (KS3) domain. Catalysis depends on for beta-ketoacyl synthase activity residues Cys-181, His-320, and His-364. The interval 559 to 875 (VFTGQGAQYA…PYYGVLSRGT (317 aa)) is acyl transferase (AT) domain. The interval 948 to 1082 (NQLLGTMMPD…LHIVFGPSSE (135 aa)) is N-terminal hotdog fold. Residues 948–1245 (NQLLGTMMPD…LKPLGALTAK (298 aa)) enclose the PKS/mFAS DH domain. The tract at residues 949 to 1242 (QLLGTMMPDS…GVELKPLGAL (294 aa)) is dehydratase (DH) domain. Residue His-980 is the Proton acceptor; for dehydratase activity of the active site. The interval 1095–1245 (MISVDNERFY…LKPLGALTAK (151 aa)) is C-terminal hotdog fold. Residue Asp-1156 is the Proton donor; for dehydratase activity of the active site. Positions 1399–1586 (EAGLWIGKII…GIDSTAPQAF (188 aa)) are methyltransferase (MT) domain. The tract at residues 2125 to 2298 (TYWLCGLSGA…AATALNVGAI (174 aa)) is ketoreductase (KR)domain. Residues 2406 to 2488 (QSRSEVLAVV…ELAELAAEQA (83 aa)) form the Carrier domain. Residue Ser-2448 is modified to O-(pantetheine 4'-phosphoryl)serine. A disordered region spans residues 2492 to 2565 (LLPGLGGEAP…TPDPHSTKGP (74 aa)). A compositionally biased stretch (polar residues) spans 2522–2534 (VPQSDETGSSSAD). Residues 2550–2559 (GYTTPTTPDP) show a composition bias toward low complexity. A reductase (R) domain region spans residues 2597–2826 (LTGVSGLLGR…DFVYVKNAAD (230 aa)).

The protein operates within secondary metabolite biosynthesis. In terms of biological role, highly reducing polyketide synthase; part of the gene cluster that mediates the biosynthesis of calbistrin A and related compounds. Calbistrin A is a secondary metabolite with an interesting structure that was recently found to have bioactivity against leukemia cells. It consists of two polyketides linked by an ester bond: a bicyclic decalin containing polyketide and a linear 12 carbon dioic acid structure. The polyketide synthase calA is probably responsible for forming the decalin moiety. Because calA lacks a designated enoylreductase (ER) domain, the required activity is provided by the trans-enoyl reductase calK. Following release from the PKS, calF then probably catalyzes the oxidation and the subsequent Diels Alder cycloisomerization that lead to the formation of the decalin moiety. The decalin polyketide backbone includes two C-methyl groups, at C7 and C11 in backbone, of which the C7 position is probably methylated by the methyltransferase domain of calA. A candidate for adding the methyl group at C11, if not done by CalA, is the cluster methyltransferase calH. Several additional tailoring enzymes within the cluster could be involved in the modification of the decalin polyketide product. Those include the 3 cytochrome P450 monooxygenases CalE, CalG and CalL, of which one might be responsible for the introduction of the extra hydroxyl group attached to the backbone of the decalin moiety, at position C9 in the backbone, that allows for attachment of the linear moiety. One tailoring enzyme activity that is expected to be involved in biosynthesis of calbistrin is an acyltransferase for connecting the two polyketide synthase products, and which could be performed by the cluster acyltransferase calJ. The enzyme responsible for the biosynthesis of the linear moiety, probably a second PKS, has not been identified yet. This Penicillium decumbens protein is Highly reducing polyketide synthase calA.